The sequence spans 71 residues: Large ribosomal subunit protein bL31 (71 aa).

Zn(2+) contacts are provided by cysteine 16, cysteine 18, cysteine 36, and cysteine 39.

Belongs to the bacterial ribosomal protein bL31 family. Type A subfamily. In terms of assembly, part of the 50S ribosomal subunit. Requires Zn(2+) as cofactor.

Its function is as follows. Binds the 23S rRNA. In Thermus thermophilus (strain ATCC BAA-163 / DSM 7039 / HB27), this protein is Large ribosomal subunit protein bL31.